We begin with the raw amino-acid sequence, 377 residues long: Guanine nucleotide-binding protein subunit beta (377 aa).

WD repeat units follow at residues 63 to 93 (GHTG…IVWN), 105 to 135 (LPCA…SIFN), 154 to 185 (GHKG…VLWD), 202 to 233 (GHTA…RLWD), 246 to 276 (CHEG…RLFD), 293 to 323 (GDIP…YVWD), and 339 to 369 (SHEG…KIWA).

It belongs to the WD repeat G protein beta family. In terms of assembly, g proteins are composed of 3 units, alpha, beta and gamma.

It localises to the cell membrane. It is found in the endoplasmic reticulum membrane. Its function is as follows. Guanine nucleotide-binding proteins (G proteins) are involved as a modulator or transducer in various transmembrane signaling systems. The beta and gamma chains are required for the GTPase activity, for replacement of GDP by GTP, and for G protein-effector interaction. The polypeptide is Guanine nucleotide-binding protein subunit beta (Nicotiana plumbaginifolia (Leadwort-leaved tobacco)).